We begin with the raw amino-acid sequence, 344 residues long: tRNA N6-adenosine threonylcarbamoyltransferase (344 aa).

Fe cation contacts are provided by His-111 and His-115. Substrate-binding positions include Leu-134–Gly-138, Asp-167, Gly-180, and Asn-272. A Fe cation-binding site is contributed by Asp-300.

The protein belongs to the KAE1 / TsaD family. Requires Fe(2+) as cofactor.

The protein resides in the cytoplasm. The catalysed reaction is L-threonylcarbamoyladenylate + adenosine(37) in tRNA = N(6)-L-threonylcarbamoyladenosine(37) in tRNA + AMP + H(+). In terms of biological role, required for the formation of a threonylcarbamoyl group on adenosine at position 37 (t(6)A37) in tRNAs that read codons beginning with adenine. Is involved in the transfer of the threonylcarbamoyl moiety of threonylcarbamoyl-AMP (TC-AMP) to the N6 group of A37, together with TsaE and TsaB. TsaD likely plays a direct catalytic role in this reaction. The polypeptide is tRNA N6-adenosine threonylcarbamoyltransferase (Idiomarina loihiensis (strain ATCC BAA-735 / DSM 15497 / L2-TR)).